We begin with the raw amino-acid sequence, 240 residues long: 1-(5-phosphoribosyl)-5-[(5-phosphoribosylamino)methylideneamino] imidazole-4-carboxamide isomerase (240 aa).

Catalysis depends on D8, which acts as the Proton acceptor. Residue D129 is the Proton donor of the active site.

It belongs to the HisA/HisF family.

It is found in the cytoplasm. It catalyses the reaction 1-(5-phospho-beta-D-ribosyl)-5-[(5-phospho-beta-D-ribosylamino)methylideneamino]imidazole-4-carboxamide = 5-[(5-phospho-1-deoxy-D-ribulos-1-ylimino)methylamino]-1-(5-phospho-beta-D-ribosyl)imidazole-4-carboxamide. It participates in amino-acid biosynthesis; L-histidine biosynthesis; L-histidine from 5-phospho-alpha-D-ribose 1-diphosphate: step 4/9. The chain is 1-(5-phosphoribosyl)-5-[(5-phosphoribosylamino)methylideneamino] imidazole-4-carboxamide isomerase from Clostridium beijerinckii (strain ATCC 51743 / NCIMB 8052) (Clostridium acetobutylicum).